The sequence spans 549 residues: Cytoplasmic trehalase (549 aa).

Substrate contacts are provided by residues arginine 168, 175 to 176, asparagine 212, 221 to 223, 292 to 294, and glycine 324; these read WD, RSQ, and RDE. Catalysis depends on proton donor/acceptor residues aspartate 326 and glutamate 509. Glutamate 525 contributes to the substrate binding site.

It belongs to the glycosyl hydrolase 37 family. In terms of assembly, monomer.

The protein resides in the cytoplasm. It carries out the reaction alpha,alpha-trehalose + H2O = alpha-D-glucose + beta-D-glucose. The protein operates within glycan degradation; trehalose degradation; D-glucose from alpha,alpha-trehalose: step 1/1. Hydrolyzes trehalose to glucose. Could be involved, in cells returning to low osmolarity conditions, in the utilization of the accumulated cytoplasmic trehalose, which was synthesized in response to high osmolarity. This chain is Cytoplasmic trehalase, found in Escherichia fergusonii (strain ATCC 35469 / DSM 13698 / CCUG 18766 / IAM 14443 / JCM 21226 / LMG 7866 / NBRC 102419 / NCTC 12128 / CDC 0568-73).